The primary structure comprises 105 residues: Heat shock protein HspQ (105 aa).

Belongs to the HspQ family.

The protein resides in the cytoplasm. Its function is as follows. Involved in the degradation of certain denaturated proteins, including DnaA, during heat shock stress. This is Heat shock protein HspQ from Escherichia fergusonii (strain ATCC 35469 / DSM 13698 / CCUG 18766 / IAM 14443 / JCM 21226 / LMG 7866 / NBRC 102419 / NCTC 12128 / CDC 0568-73).